The chain runs to 162 residues: Beta-lactoglobulin (162 aa).

Cystine bridges form between C66-C160, C106-C119, and C106-C121.

Belongs to the calycin superfamily. Lipocalin family. As to quaternary structure, under physiological conditions beta-lactoglobulin exists as an equilibrium mixture of monomeric and dimeric forms. Post-translationally, alternate disulfide bonds occur in equal amounts.

The protein resides in the secreted. Functionally, lactoglobulin is the primary component of whey, it binds retinol and is probably involved in the transport of that molecule. The polypeptide is Beta-lactoglobulin (LGB) (Ovis aries musimon (Mouflon)).